The following is a 994-amino-acid chain: Translocase of chloroplast 108, chloroplastic (994 aa).

Disordered regions lie at residues 14–61 (KEAS…EDEP), 84–124 (TTDL…DPSV), and 152–287 (AVDG…DETR). 2 stretches are compositionally biased toward polar residues: residues 37 to 53 (GETTVVTTSISEGANES) and 84 to 98 (TTDLEKVSSTPTPSN). Basic and acidic residues predominate over residues 99–121 (AEKESPEATEVRIVEEGKLEKAD). Over residues 166–197 (NDGDTDANTADEDNENDEDDVDEDEDEDDADM) the composition is skewed to acidic residues. Over residues 249–268 (ASDSPGRNTQRPNGALSTQI) the composition is skewed to polar residues. A compositionally biased stretch (low complexity) spans 269–280 (TSTTDESASSDA). The AIG1-type G domain maps to 360–589 (DFACTILVLG…KLQETTAPGR (230 aa)). The tract at residues 369 to 376 (GKTGVGKS) is G1. 372–377 (GVGKSS) contacts GTP. Ser-376 serves as a coordination point for Mg(2+). The segment at 395-399 (PSTNK) is G2. A G3 region spans residues 416-419 (DTPG). The interval 488–491 (THAS) is G4. Residues His-489 and 537–538 (EN) contribute to the GTP site. Positions 537-539 (ENH) are G5. Disordered regions lie at residues 616–659 (LPDE…EDLT) and 691–716 (EAKKRQAQMSKEELAEAEEAEDEAGN). Acidic residues predominate over residues 620-643 (QAGESDESDDDEEEEDSDADDYDE). Over residues 650–659 (LSKEELEDLT) the composition is skewed to basic and acidic residues. Residues 705–714 (AEAEEAEDEA) are compositionally biased toward acidic residues. Residues 969 to 989 (MVLIGIVPILRSLINCRFGFG) traverse the membrane as a helical segment.

The protein belongs to the TRAFAC class TrmE-Era-EngA-EngB-Septin-like GTPase superfamily. AIG1/Toc34/Toc159-like paraseptin GTPase family. TOC159 subfamily. In terms of assembly, part of the TOC core complex. Requires Mg(2+) as cofactor.

It is found in the plastid. The protein localises to the chloroplast outer membrane. Its function is as follows. GTPase involved in protein precursor import into chloroplasts. Seems to recognize chloroplast-destined precursor proteins and regulate their presentation to the translocation channel through GTP hydrolysis. Probably specialized in the import of nuclear encoded non-photosynthetic preproteins from the cytoplasm to the chloroplast. The polypeptide is Translocase of chloroplast 108, chloroplastic (Physcomitrium patens (Spreading-leaved earth moss)).